The following is a 264-amino-acid chain: Thymidylate synthase (264 aa).

R21 contributes to the dUMP binding site. H51 serves as a coordination point for (6R)-5,10-methylene-5,6,7,8-tetrahydrofolate. 126–127 contributes to the dUMP binding site; sequence RR. Catalysis depends on C146, which acts as the Nucleophile. Residues 166-169, N177, and 207-209 contribute to the dUMP site; these read RSCD and HLY. A (6R)-5,10-methylene-5,6,7,8-tetrahydrofolate-binding site is contributed by D169. A (6R)-5,10-methylene-5,6,7,8-tetrahydrofolate-binding site is contributed by A263.

This sequence belongs to the thymidylate synthase family. Bacterial-type ThyA subfamily. Homodimer.

It is found in the cytoplasm. The enzyme catalyses dUMP + (6R)-5,10-methylene-5,6,7,8-tetrahydrofolate = 7,8-dihydrofolate + dTMP. Its pathway is pyrimidine metabolism; dTTP biosynthesis. In terms of biological role, catalyzes the reductive methylation of 2'-deoxyuridine-5'-monophosphate (dUMP) to 2'-deoxythymidine-5'-monophosphate (dTMP) while utilizing 5,10-methylenetetrahydrofolate (mTHF) as the methyl donor and reductant in the reaction, yielding dihydrofolate (DHF) as a by-product. This enzymatic reaction provides an intracellular de novo source of dTMP, an essential precursor for DNA biosynthesis. In Salmonella typhi, this protein is Thymidylate synthase.